The primary structure comprises 306 residues: 17-beta-hydroxysteroid dehydrogenase type 3 (306 aa).

Residue 44–73 (GQWAVITGAGDGIGKAYSFELARHGLNVVL) participates in NADP(+) binding. S181 contributes to the substrate binding site. Y194 serves as the catalytic Proton acceptor.

This sequence belongs to the short-chain dehydrogenases/reductases (SDR) family. 17-beta-HSD 3 subfamily.

Its subcellular location is the endoplasmic reticulum. The enzyme catalyses a 17beta-hydroxy steroid + NADP(+) = a 17-oxo steroid + NADPH + H(+). It carries out the reaction testosterone + NADP(+) = androst-4-ene-3,17-dione + NADPH + H(+). It catalyses the reaction 17beta-estradiol + NADP(+) = estrone + NADPH + H(+). The catalysed reaction is 3beta-hydroxyandrost-5-en-17-one + NADPH + H(+) = androst-5-en-3beta,17beta-diol + NADP(+). The enzyme catalyses 17beta-hydroxy-5alpha-androstan-3-one + NADP(+) = 5alpha-androstan-3,17-dione + NADPH + H(+). It carries out the reaction androsterone + NADPH + H(+) = 5alpha-androstane-3alpha,17beta-diol + NADP(+). It catalyses the reaction 3beta-hydroxy-5alpha-androstan-17-one + NADPH + H(+) = 5alpha-androstane-3beta,17beta-diol + NADP(+). The catalysed reaction is androst-4-ene-3,11,17-trione + NADPH + H(+) = 17beta-hydroxyandrost-4-ene-3,11-dione + NADP(+). The enzyme catalyses 11beta-hydroxyandrost-4-ene-3,17-dione + NADPH + H(+) = 11beta,17beta-dihydroxyandrost-4-ene-3-one + NADP(+). The protein operates within hormone biosynthesis; testosterone biosynthesis. It participates in steroid metabolism. In terms of biological role, catalyzes the conversion of 17-oxosteroids to 17beta-hydroxysteroids. Favors the reduction of androstenedione to testosterone. Testosterone is the key androgen driving male development and function. Uses NADPH while the two other EDH17B enzymes use NADH. Androgens such as epiandrosterone, dehydroepiandrosterone, androsterone and androstanedione are accepted as substrates and reduced at C-17. Can reduce 11-ketoandrostenedione as well as 11beta-hydroxyandrostenedione at C-17 to the respective testosterone forms. Plays a role in the rate-limiting-step for the maximum level of testosterone production by the testis but does not affect basal testosterone production. The sequence is that of 17-beta-hydroxysteroid dehydrogenase type 3 from Rattus norvegicus (Rat).